The sequence spans 469 residues: Neuraminidase (469 aa).

Residues 1 to 9 (MNPNQKIIT) lie on the Intravirion side of the membrane. Residues 10 to 30 (IGSVSLTIATICFLMQIAILV) form a helical membrane-spanning segment. The segment at 11–33 (GSVSLTIATICFLMQIAILVTTV) is involved in apical transport and lipid raft association. The Virion surface portion of the chain corresponds to 31–469 (TTVTLHFKQY…DGADINLMPI (439 aa)). The segment at 36–88 (HFKQYECSSPPNNQVMPCEPIIIERNITEIVYLTNTTIEKEICPKLVEYRNWS) is hypervariable stalk region. N-linked (GlcNAc...) asparagine; by host glycosylation is found at Asn-61, Asn-70, and Asn-86. The segment at 91–469 (QCKITGFAPF…DGADINLMPI (379 aa)) is head of neuraminidase. 8 cysteine pairs are disulfide-bonded: Cys-92-Cys-417, Cys-124-Cys-129, Cys-183-Cys-230, Cys-232-Cys-237, Cys-278-Cys-291, Cys-280-Cys-289, Cys-318-Cys-337, and Cys-421-Cys-447. A substrate-binding site is contributed by Arg-118. Asn-146 carries an N-linked (GlcNAc...) asparagine; by host glycan. The active-site Proton donor/acceptor is Asp-151. Arg-152 contacts substrate. Asn-200 and Asn-234 each carry an N-linked (GlcNAc...) asparagine; by host glycan. 276–277 (EE) lines the substrate pocket. Substrate is bound at residue Arg-292. Ca(2+) is bound by residues Asp-293, Gly-297, and Asp-324. Arg-371 is a binding site for substrate. Asn-402 is a glycosylation site (N-linked (GlcNAc...) asparagine; by host). Residue Tyr-406 is the Nucleophile of the active site.

The protein belongs to the glycosyl hydrolase 34 family. In terms of assembly, homotetramer. The cofactor is Ca(2+). Post-translationally, N-glycosylated.

It is found in the virion membrane. The protein localises to the host apical cell membrane. The enzyme catalyses Hydrolysis of alpha-(2-&gt;3)-, alpha-(2-&gt;6)-, alpha-(2-&gt;8)- glycosidic linkages of terminal sialic acid residues in oligosaccharides, glycoproteins, glycolipids, colominic acid and synthetic substrates.. Its activity is regulated as follows. Inhibited by the neuraminidase inhibitors zanamivir (Relenza) and oseltamivir (Tamiflu). These drugs interfere with the release of progeny virus from infected cells and are effective against all influenza strains. Resistance to neuraminidase inhibitors is quite rare. Its function is as follows. Catalyzes the removal of terminal sialic acid residues from viral and cellular glycoconjugates. Cleaves off the terminal sialic acids on the glycosylated HA during virus budding to facilitate virus release. Additionally helps virus spread through the circulation by further removing sialic acids from the cell surface. These cleavages prevent self-aggregation and ensure the efficient spread of the progeny virus from cell to cell. Otherwise, infection would be limited to one round of replication. Described as a receptor-destroying enzyme because it cleaves a terminal sialic acid from the cellular receptors. May facilitate viral invasion of the upper airways by cleaving the sialic acid moieties on the mucin of the airway epithelial cells. Likely to plays a role in the budding process through its association with lipid rafts during intracellular transport. May additionally display a raft-association independent effect on budding. Plays a role in the determination of host range restriction on replication and virulence. Sialidase activity in late endosome/lysosome traffic seems to enhance virus replication. The protein is Neuraminidase of Influenza A virus (strain A/Memphis/4/1980 H3N2).